We begin with the raw amino-acid sequence, 331 residues long: UDP-GalNAc:beta-1,3-N-acetylgalactosaminyltransferase 1 (331 aa).

At 1 to 20 the chain is on the cytoplasmic side; that stretch reads MASALWTVLPSRMSLRSLQW. Residues 21-43 form a helical; Signal-anchor for type II membrane protein membrane-spanning segment; sequence SLLLLSLLSFLVMWYLSLPHYNV. The Lumenal segment spans residues 44–331; sequence IERVNWMYFY…VMLRNTTCHY (288 aa). Asn72, Asn154, Asn198, Asn212, and Asn326 each carry an N-linked (GlcNAc...) asparagine glycan.

It belongs to the glycosyltransferase 31 family. Mg(2+) serves as cofactor.

It localises to the golgi apparatus membrane. It carries out the reaction a globoside Gb3Cer (d18:1(4E)) + UDP-N-acetyl-alpha-D-galactosamine = a globoside Gb4Cer (d18:1(4E)) + UDP + H(+). It participates in protein modification; protein glycosylation. Functionally, transfers N-acetylgalactosamine onto globotriaosylceramide. Plays a critical role in preimplantation stage embryonic development. This chain is UDP-GalNAc:beta-1,3-N-acetylgalactosaminyltransferase 1 (B3GALNT1), found in Pongo abelii (Sumatran orangutan).